The following is a 252-amino-acid chain: MKKKIIIANWKLNGNIQLLQTLLKPLVNFYIRHKNKSSIKLVIMPPYVYLYPMKSIISHSSILLGSQNVDINLIGAFTGEVSINMLKDVGVSYVLVGHSERRQYHRENDVIIAKKFKIVKDSHLIPVLCIGETEHEYLSCKTEKICKFQIDAIFDLLGPSGFNNSVIAYEPKWAIGTNTIPSINFIQKILMFIQNYIFNKQNSTIKLFSLQYGGSVNEHNIIELYDVKNIDGFLVGSASLSLDFFKKLLNNC.

9 to 11 (NWK) contributes to the substrate binding site. His98 acts as the Electrophile in catalysis. Residue Glu170 is the Proton acceptor of the active site. Residues Gly176 and Ser215 each contribute to the substrate site.

It belongs to the triosephosphate isomerase family. In terms of assembly, homodimer.

It is found in the cytoplasm. It catalyses the reaction D-glyceraldehyde 3-phosphate = dihydroxyacetone phosphate. It participates in carbohydrate biosynthesis; gluconeogenesis. It functions in the pathway carbohydrate degradation; glycolysis; D-glyceraldehyde 3-phosphate from glycerone phosphate: step 1/1. Its function is as follows. Involved in the gluconeogenesis. Catalyzes stereospecifically the conversion of dihydroxyacetone phosphate (DHAP) to D-glyceraldehyde-3-phosphate (G3P). In Buchnera aphidicola subsp. Baizongia pistaciae (strain Bp), this protein is Triosephosphate isomerase.